Reading from the N-terminus, the 236-residue chain is MGMGTFTTDESDKHEESYLSLGLTVSQSKKNNTEYPKVLLLLAAYLDRSVQKNEDLLDSNKIKDSSTIFHGHRAPDLSIKLYAERIFKYSECSPSCFVLALIYMERYLQQPHVYMTSLSVHRLLITSVVVAAKFTDDAFFNNAFYARVGGISTVEMNRLELDLLFNLDFRLKVDLETFGSYCLQLEKETMVLVIDRPIQQVHGVNSTKDLSRNSSIDESCKSELMRYSSQALQGCS.

Belongs to the cyclin family. Cyclin U/P subfamily.

This Oryza sativa subsp. japonica (Rice) protein is Cyclin-P3-1 (CYCP3-1).